A 164-amino-acid polypeptide reads, in one-letter code: Two-component response regulator ARR16 (164 aa).

The region spanning 30-160 (HVLAVDDNLI…DVEKLKCHLM (131 aa)) is the Response regulatory domain. Asp-93 bears the 4-aspartylphosphate mark.

Belongs to the ARR family. Type-A subfamily. In terms of processing, two-component system major event consists of a His-to-Asp phosphorelay between a sensor histidine kinase (HK) and a response regulator (RR). In plants, the His-to-Asp phosphorelay involves an additional intermediate named Histidine-containing phosphotransfer protein (HPt). This multistep phosphorelay consists of a His-Asp-His-Asp sequential transfer of a phosphate group between first a His and an Asp of the HK protein, followed by the transfer to a conserved His of the HPt protein and finally the transfer to an Asp in the receiver domain of the RR protein.

It is found in the nucleus. In terms of biological role, functions as a response regulator involved in His-to-Asp phosphorelay signal transduction system. Phosphorylation of the Asp residue in the receiver domain activates the ability of the protein to promote the transcription of target genes. Type-A response regulators seem to act as negative regulators of the cytokinin signaling. The sequence is that of Two-component response regulator ARR16 (ARR16) from Arabidopsis thaliana (Mouse-ear cress).